Reading from the N-terminus, the 1415-residue chain is DNA-directed RNA polymerase subunit beta' (1415 aa).

Cysteine 214, cysteine 294, cysteine 301, and cysteine 304 together coordinate Zn(2+). The segment covering 1335 to 1351 (QNFVDSQGKPQSQSSFI) has biased composition (polar residues). The interval 1335–1390 (QNFVDSQGKPQSQSSFIDDSMSEFSPVKDKSGSVLDDSDFPPGNFDSDFPADNYDL) is disordered.

The protein belongs to the RNA polymerase beta' chain family. RpoC2 subfamily. In terms of assembly, in cyanobacteria the RNAP catalytic core is composed of 2 alpha, 1 beta, 1 beta', 1 gamma and 1 omega subunit. When a sigma factor is associated with the core the holoenzyme is formed, which can initiate transcription. Zn(2+) serves as cofactor.

It catalyses the reaction RNA(n) + a ribonucleoside 5'-triphosphate = RNA(n+1) + diphosphate. DNA-dependent RNA polymerase catalyzes the transcription of DNA into RNA using the four ribonucleoside triphosphates as substrates. The chain is DNA-directed RNA polymerase subunit beta' from Trichodesmium erythraeum (strain IMS101).